The primary structure comprises 211 residues: tRNA (guanine-N(7)-)-methyltransferase (211 aa).

The S-adenosyl-L-methionine site is built by glutamate 43, glutamate 68, aspartate 95, and aspartate 117. Residue aspartate 117 is part of the active site. Substrate contacts are provided by residues lysine 121, aspartate 153, and 190 to 193 (TEYE).

Belongs to the class I-like SAM-binding methyltransferase superfamily. TrmB family.

It catalyses the reaction guanosine(46) in tRNA + S-adenosyl-L-methionine = N(7)-methylguanosine(46) in tRNA + S-adenosyl-L-homocysteine. It functions in the pathway tRNA modification; N(7)-methylguanine-tRNA biosynthesis. Its function is as follows. Catalyzes the formation of N(7)-methylguanine at position 46 (m7G46) in tRNA. This chain is tRNA (guanine-N(7)-)-methyltransferase, found in Staphylococcus saprophyticus subsp. saprophyticus (strain ATCC 15305 / DSM 20229 / NCIMB 8711 / NCTC 7292 / S-41).